The chain runs to 510 residues: ATP synthase subunit alpha, mitochondrial (510 aa).

Residue 171–178 (GDRQTGKT) participates in ATP binding.

As to quaternary structure, F-type ATP synthases have 2 components, the catalytic core F(1) and the membrane-embedded component F(0), linked together by a central stalk and a peripheral stalk. The central stalk, also called rotor shaft, is often seen as part of F(1). The peripheral stalk is seen as part of F(0). F(0) contains the membrane channel next to the rotor. F-type ATP synthases form dimers but each monomer functions independently in ATP generation. The dimer consists of 18 different polypeptides: ATP1 (subunit alpha, part of F(1), 3 molecules per monomer), ATP2 (subunit beta, part of F(1), 3 molecules per monomer), ATP3 (subunit gamma, part of the central stalk), ATP4 (subunit b, part of the peripheral stalk), ATP5/OSCP (subunit 5/OSCP, part of the peripheral stalk), ATP6 (subunit a, part of the peripheral stalk), ATP7 (subunit d, part of the peripheral stalk), ATP8 (subunit 8, part of the peripheral stalk), OLI1 (subunit c, part of the rotor, 10 molecules per monomer), ATP14 (subunit h, part of the peripheral stalk), ATP15 (subunit epsilon, part of the central stalk), ATP16 (subunit delta, part of the central stalk), ATP17 (subunit f, part of the peripheral stalk), ATP18 (subunit i/j, part of the peripheral stalk). Dimer-specific subunits are ATP19 (subunit k, at interface between monomers), ATP20 (subunit g, at interface between monomers), TIM11 (subunit e, at interface between monomers). Also contains subunit L.

It localises to the mitochondrion inner membrane. Mitochondrial membrane ATP synthase (F(1)F(0) ATP synthase or Complex V) produces ATP from ADP in the presence of a proton gradient across the membrane which is generated by electron transport complexes of the respiratory chain. F-type ATP synthases consist of two structural domains, F(1) - containing the extramembraneous catalytic core, and F(0) - containing the membrane proton channel, linked together by a central stalk and a peripheral stalk. During catalysis, ATP synthesis in the catalytic domain of F(1) is coupled via a rotary mechanism of the central stalk subunits to proton translocation. Subunits alpha/ATP1 and beta/ATP2 form the catalytic core in F(1). Rotation of the central stalk against the surrounding alpha/ATP1(3)beta/ATP2(3) subunits leads to hydrolysis of ATP in three separate catalytic sites on the beta/ATP2 subunits. Subunit alpha/ATP1 does not bear the catalytic high-affinity ATP-binding sites. This is ATP synthase subunit alpha, mitochondrial from Pichia angusta (Yeast).